Consider the following 154-residue polypeptide: Interleukin-2 (154 aa).

An N-terminal signal peptide occupies residues 1–20 (MYRMQLLSCIALSLALITNS). Thr23 carries O-linked (GalNAc...) threonine glycosylation. An intrachain disulfide couples Cys78 to Cys126.

The protein belongs to the IL-2 family.

The protein localises to the secreted. Functionally, cytokine produced by activated CD4-positive helper T-cells and to a lesser extend activated CD8-positive T-cells and natural killer (NK) cells that plays pivotal roles in the immune response and tolerance. Binds to a receptor complex composed of either the high-affinity trimeric IL-2R (IL2RA/CD25, IL2RB/CD122 and IL2RG/CD132) or the low-affinity dimeric IL-2R (IL2RB and IL2RG). Interaction with the receptor leads to oligomerization and conformation changes in the IL-2R subunits resulting in downstream signaling starting with phosphorylation of JAK1 and JAK3. In turn, JAK1 and JAK3 phosphorylate the receptor to form a docking site leading to the phosphorylation of several substrates including STAT5. This process leads to activation of several pathways including STAT, phosphoinositide-3-kinase/PI3K and mitogen-activated protein kinase/MAPK pathways. Functions as a T-cell growth factor and can increase NK-cell cytolytic activity as well. Promotes strong proliferation of activated B-cells and subsequently immunoglobulin production. Plays a pivotal role in regulating the adaptive immune system by controlling the survival and proliferation of regulatory T-cells, which are required for the maintenance of immune tolerance. Moreover, participates in the differentiation and homeostasis of effector T-cell subsets, including Th1, Th2, Th17 as well as memory CD8-positive T-cells. The protein is Interleukin-2 (IL2) of Papio hamadryas (Hamadryas baboon).